Consider the following 269-residue polypeptide: Formamidopyrimidine-DNA glycosylase (269 aa).

Catalysis depends on Pro-2, which acts as the Schiff-base intermediate with DNA. The active-site Proton donor is the Glu-3. Lys-57 acts as the Proton donor; for beta-elimination activity in catalysis. Positions 90, 109, and 150 each coordinate DNA. The segment at 235–269 (QVYGRAGEPCRACGTPIESAKHGQRSTFFCPRCQR) adopts an FPG-type zinc-finger fold. Arg-259 acts as the Proton donor; for delta-elimination activity in catalysis.

The protein belongs to the FPG family. Monomer. Requires Zn(2+) as cofactor.

It carries out the reaction Hydrolysis of DNA containing ring-opened 7-methylguanine residues, releasing 2,6-diamino-4-hydroxy-5-(N-methyl)formamidopyrimidine.. It catalyses the reaction 2'-deoxyribonucleotide-(2'-deoxyribose 5'-phosphate)-2'-deoxyribonucleotide-DNA = a 3'-end 2'-deoxyribonucleotide-(2,3-dehydro-2,3-deoxyribose 5'-phosphate)-DNA + a 5'-end 5'-phospho-2'-deoxyribonucleoside-DNA + H(+). Involved in base excision repair of DNA damaged by oxidation or by mutagenic agents. Acts as a DNA glycosylase that recognizes and removes damaged bases. Has a preference for oxidized purines, such as 7,8-dihydro-8-oxoguanine (8-oxoG). Has AP (apurinic/apyrimidinic) lyase activity and introduces nicks in the DNA strand. Cleaves the DNA backbone by beta-delta elimination to generate a single-strand break at the site of the removed base with both 3'- and 5'-phosphates. The sequence is that of Formamidopyrimidine-DNA glycosylase from Serratia proteamaculans (strain 568).